The following is a 101-amino-acid chain: NAD(P)H-quinone oxidoreductase subunit 4L, chloroplastic (101 aa).

3 consecutive transmembrane segments (helical) span residues 2–22 (MLEHVLVLSAYLFSIGIYGLI), 32–52 (MCLELILNAVNINFVTFSDFF), and 61–81 (IFSIFVIAIAAAEAAIGPAIV).

It belongs to the complex I subunit 4L family. In terms of assembly, NDH is composed of at least 16 different subunits, 5 of which are encoded in the nucleus.

The protein localises to the plastid. The protein resides in the chloroplast thylakoid membrane. It catalyses the reaction a plastoquinone + NADH + (n+1) H(+)(in) = a plastoquinol + NAD(+) + n H(+)(out). It carries out the reaction a plastoquinone + NADPH + (n+1) H(+)(in) = a plastoquinol + NADP(+) + n H(+)(out). Functionally, NDH shuttles electrons from NAD(P)H:plastoquinone, via FMN and iron-sulfur (Fe-S) centers, to quinones in the photosynthetic chain and possibly in a chloroplast respiratory chain. The immediate electron acceptor for the enzyme in this species is believed to be plastoquinone. Couples the redox reaction to proton translocation, and thus conserves the redox energy in a proton gradient. In Vitis vinifera (Grape), this protein is NAD(P)H-quinone oxidoreductase subunit 4L, chloroplastic.